The sequence spans 4146 residues: DNA-dependent protein kinase catalytic subunit (4146 aa).

4 HEAT repeats span residues 308–343 (DDYQ…LKQI), 925–962 (VIYL…VAFM), 1026–1062 (QDTV…LRWS), and 1075–1111 (PVNT…YRDF). TPR repeat units lie at residues 1745–1778 (PMKS…SQSP) and 1974–2007 (VFSE…QRNY). Ser-2075 is subject to Phosphoserine; by autocatalysis. Position 2631 is a phosphothreonine; by autocatalysis (Thr-2631). The residue at position 2634 (Ser-2634) is a Phosphoserine; by autocatalysis. A phosphothreonine; by autocatalysis mark is found at Thr-2659 and Thr-2668. An FAT domain is found at 2873-3556 (FIACVQDMCY…VYPFMVSGES (684 aa)). The 333-residue stretch at 3739 to 4071 (FDERVSVMAS…IHCAKRKLDG (333 aa)) folds into the PI3K/PI4K catalytic domain. A G-loop region spans residues 3745 to 3751 (VMASIRK). The tract at residues 3937 to 3945 (GIGDRHLSN) is catalytic loop. The interval 3957–3982 (GIDFGHAFGTATQFLPVPELMPFRLT) is activation loop. The region spanning 4114–4146 (DGLTEETQVQCLIDQATDPNILGRVWKGWEPWI) is the FATC domain.

It belongs to the PI3/PI4-kinase family. As to quaternary structure, DNA-PK is a heterotrimer of prkdc and the Ku dimer (composed of xrcc6/Ku70 and xrcc5/Ku86). Component of the core long-range non-homologous end joining (NHEJ) complex (also named DNA-PK complex) composed of prkdc, lig4, xrcc4, xrcc6/ku70, xrcc5/ku86 and nhej1/xlf. Additional component of the NHEJ complex includes paxx. Following autophosphorylation, prkdc dissociates from DNA. Post-translationally, autophosphorylated at two clusters, the T2609 cluster and the S2056 cluster. Autophosphorylated on Ser-2075, Thr-2631, Thr-2659 and Thr-2668. Ser-2075 and Thr-2668 are DNA damage-inducible phosphorylation sites (inducible with ionizing radiation, IR) dephosphorylated by PPP5C. Autophosphorylation induces a conformational change that leads to remodeling of the DNA-PK complex, requisite for efficient end processing and DNA repair. Autophosphorylation in trans within DNA-PK complexes loaded on DNA ends leads to the dissociation of PRKDC from DNA and the transition into the short-range NHEJ complex. Autophosphorylation of the T2609 cluster is required for hematopoietic development and protein synthesis in erythrocytes precursors.

It localises to the nucleus. The protein localises to the nucleolus. The enzyme catalyses L-seryl-[protein] + ATP = O-phospho-L-seryl-[protein] + ADP + H(+). It carries out the reaction L-threonyl-[protein] + ATP = O-phospho-L-threonyl-[protein] + ADP + H(+). Serine/threonine-protein kinase that acts as a molecular sensor for DNA damage. Involved in DNA nonhomologous end joining (NHEJ) required for double-strand break (DSB) repair and V(D)J recombination. Must be bound to DNA to express its catalytic properties. Promotes processing of hairpin DNA structures in V(D)J recombination by activation of the hairpin endonuclease artemis (DCLRE1C). Recruited by XRCC5 and XRCC6 to DNA ends and is required to (1) protect and align broken ends of DNA, thereby preventing their degradation, (2) and sequester the DSB for repair by NHEJ. Acts as a scaffold protein to aid the localization of DNA repair proteins to the site of damage. The assembly of the DNA-PK complex at DNA ends is also required for the NHEJ ligation step. Found at the ends of chromosomes, suggesting a further role in the maintenance of telomeric stability and the prevention of chromosomal end fusion. As part of the DNA-PK complex, involved in the early steps of ribosome assembly by promoting the processing of precursor rRNA into mature 18S rRNA in the small-subunit processome. Recognizes the substrate consensus sequence [ST]-Q. Phosphorylates 'Ser-139' of histone variant H2AX, thereby regulating DNA damage response mechanism. This chain is DNA-dependent protein kinase catalytic subunit (prkdc), found in Xenopus laevis (African clawed frog).